We begin with the raw amino-acid sequence, 953 residues long: Mannosylglycoprotein endo-beta-mannosidase (953 aa).

Catalysis depends on Glu-461, which acts as the Proton donor. Glu-553 functions as the Nucleophile in the catalytic mechanism.

Belongs to the glycosyl hydrolase 2 family. As to quaternary structure, heterotrimer of 31 kDa, 28 kDa and 42 kDa subunits. In terms of processing, the mature enzyme is proteotically cleaved into 3 subunits of 31 kDa, 28 kDa and 42 kDa. As to expression, ubiquitously expressed.

The enzyme catalyses Hydrolysis of the alpha-D-mannosyl-(1-&gt;6)-beta-D-mannosyl-(1-&gt;4)-N-acetyl-beta-D-glucosaminyl-(1-&gt;4)-N-acetyl-beta-D-glucosaminyl sequence of glycoprotein to alpha-D-mannosyl-(1-&gt;6)-D-mannose and N-acetyl-beta-D-glucosaminyl-(1-&gt;4)-N-acetyl-beta-D-glucosaminyl sequences.. Glycosidase that specifically hydrolyzes the Man-beta-1,4-GlcNAc linkage in the trimannosyl core structure of N-glycans. Does not hydrolyzes pyridylamino derivatives sugar chains containing Man-alpha-1,3-Man-beta or Xylose-beta-1,2-Man-beta. The protein is Mannosylglycoprotein endo-beta-mannosidase (EBM) of Lilium longiflorum (Trumpet lily).